Consider the following 169-residue polypeptide: Protein MGF 110-12L (169 aa).

The next 3 helical transmembrane spans lie at K2–Q20, Q121–C141, and T148–N168.

The protein belongs to the asfivirus MGF 110 family.

It is found in the host membrane. Its function is as follows. Plays a role in virus cell tropism, and may be required for efficient virus replication in macrophages. The sequence is that of Protein MGF 110-12L from African swine fever virus (isolate Pig/Kenya/KEN-50/1950) (ASFV).